The following is a 104-amino-acid chain: Phycoerythrin alpha-2 chain, chloroplastic (104 aa).

The N-terminal 37 residues, 1 to 37 (MSAKIIAFSAVVATASAFAPTAGFVPRLRSGATSVNM), are a transit peptide targeting the chloroplast. Position 41 is a 5-hydroxylysine (Lys41). 15,16-dihydrobiliverdin contacts are provided by Cys56 and Arg58. The tract at residues 61–63 (KEY) is 15,16-dihydrobiliverdin chromophore. 15,16-dihydrobiliverdin is bound at residue Lys78.

Belongs to the phycoerythrin family. In terms of assembly, heterotetramer of 2 different alpha chains and 2 identical beta chains. The subunit composition could comprise of any combination of 2 out of 4 different alpha units with an invariant beta unit. Post-translationally, contains one covalently linked 15,16-dihydrobiliverdin chromophore.

It is found in the plastid. The protein resides in the chloroplast thylakoid membrane. Functionally, light-harvesting photosynthetic tetrapyrrole chromophore-protein from the phycobiliprotein complex. This Rhodomonas sp. (strain CS 24) (Chroomonas sp. (strain CS24)) protein is Phycoerythrin alpha-2 chain, chloroplastic (cpeA2).